The chain runs to 379 residues: Alcohol dehydrogenase class-P (379 aa).

S2 is modified (N-acetylserine). Zn(2+) is bound at residue C47. Position 49 (T49) interacts with an alcohol. T49 is a binding site for NAD(+). Zn(2+)-binding residues include D50, H69, E70, C99, C102, C105, C113, and C177. H69 lines the an alcohol pocket. Residues V206 and D226 each coordinate NAD(+). A Phosphoserine modification is found at S229. NAD(+)-binding residues include R231, T272, V295, V297, T320, F322, and R372.

The protein belongs to the zinc-containing alcohol dehydrogenase family. Class-P subfamily. In terms of assembly, homodimer. It depends on Zn(2+) as a cofactor. Post-translationally, glutathionylated. As to expression, root specific. Also detected in etiolated seedlings and leaves in cold conditions.

It is found in the cytoplasm. The enzyme catalyses a primary alcohol + NAD(+) = an aldehyde + NADH + H(+). It catalyses the reaction a secondary alcohol + NAD(+) = a ketone + NADH + H(+). It carries out the reaction ethanol + NAD(+) = acetaldehyde + NADH + H(+). Alcohol dehydrogenase activity show inverse correlation with the decreasing availability of oxygen. Slightly repressed by thiol-modifying agents N-ethylmaleimide (NEM) and 5,5-dithio-bis-(2-nitrobenzoic acid) (DTNB), as well as by methyl methanethiosulfonate (MMTS) in a dose-dependent manner. Inhibited by hydrogen peroxide H(2)O(2). Alcohol dehydrogenase catalyzing the reduction of toxic aldehydes to the corresponding alcohols. Mostly active on ethanol (EtOH), but exhibits broad substrate selectivity for primary and secondary alcohols (e.g. cinnamyl alcohol, octanol, geraniol, butanol, propyl alcohol, pentanol, isopentanol, ethylene glycol, isopropanol, methanol and tertiary butyl alcohol). Also catalyzes the reverse reaction to convert allyl alcohol to highly toxic acryl-aldehyde. Required for survival and acclimation in hypoxic conditions, especially in roots. Not able to catalyze NADH-dependent degradation of S-nitrosoglutathione (GSNO). This chain is Alcohol dehydrogenase class-P, found in Arabidopsis thaliana (Mouse-ear cress).